The sequence spans 419 residues: UDP-N-acetylglucosamine 1-carboxyvinyltransferase (419 aa).

Position 22-23 (22-23 (KN)) interacts with phosphoenolpyruvate. Residue Arg92 participates in UDP-N-acetyl-alpha-D-glucosamine binding. Cys116 functions as the Proton donor in the catalytic mechanism. A 2-(S-cysteinyl)pyruvic acid O-phosphothioketal modification is found at Cys116. Residues 121 to 125 (RPVDQ), Asp306, and Ile328 each bind UDP-N-acetyl-alpha-D-glucosamine.

Belongs to the EPSP synthase family. MurA subfamily.

It is found in the cytoplasm. The enzyme catalyses phosphoenolpyruvate + UDP-N-acetyl-alpha-D-glucosamine = UDP-N-acetyl-3-O-(1-carboxyvinyl)-alpha-D-glucosamine + phosphate. Its pathway is cell wall biogenesis; peptidoglycan biosynthesis. Functionally, cell wall formation. Adds enolpyruvyl to UDP-N-acetylglucosamine. Target for the antibiotic phosphomycin. The protein is UDP-N-acetylglucosamine 1-carboxyvinyltransferase of Acinetobacter guillouiae (Acinetobacter genomosp. 11).